The primary structure comprises 432 residues: Histidinol dehydrogenase (432 aa).

NAD(+) contacts are provided by Tyr-133, Gln-194, and Asn-217. Substrate is bound by residues Ser-240, Gln-262, and His-265. The Zn(2+) site is built by Gln-262 and His-265. Catalysis depends on proton acceptor residues Glu-330 and His-331. His-331, Asp-364, Glu-418, and His-423 together coordinate substrate. Asp-364 contacts Zn(2+). A Zn(2+)-binding site is contributed by His-423.

This sequence belongs to the histidinol dehydrogenase family. The cofactor is Zn(2+).

It carries out the reaction L-histidinol + 2 NAD(+) + H2O = L-histidine + 2 NADH + 3 H(+). It participates in amino-acid biosynthesis; L-histidine biosynthesis; L-histidine from 5-phospho-alpha-D-ribose 1-diphosphate: step 9/9. In terms of biological role, catalyzes the sequential NAD-dependent oxidations of L-histidinol to L-histidinaldehyde and then to L-histidine. This Nitrosomonas europaea (strain ATCC 19718 / CIP 103999 / KCTC 2705 / NBRC 14298) protein is Histidinol dehydrogenase.